We begin with the raw amino-acid sequence, 106 residues long: UPF0145 protein PP_2873 (106 aa).

This sequence belongs to the UPF0145 family.

This chain is UPF0145 protein PP_2873, found in Pseudomonas putida (strain ATCC 47054 / DSM 6125 / CFBP 8728 / NCIMB 11950 / KT2440).